The primary structure comprises 336 residues: Vacuolar protein sorting-associated protein 26B (336 aa).

A phosphoserine mark is found at serine 302, serine 304, and serine 319.

This sequence belongs to the VPS26 family. As to quaternary structure, component of the heterotrimeric retromer cargo-selective complex (CSC), also described as vacuolar protein sorting subcomplex (VPS), formed by VPS26 (VPS26A or VPS26B), VPS29 and VPS35. The CSC has a highly elongated structure with VPS26 and VPS29 binding independently at opposite distal ends of VPS35 as central platform. The CSC is believed to associate with variable sorting nexins to form functionally distinct retromer complex variants. The originally described SNX-BAR retromer is a pentamer containing the CSC and a heterodimeric membrane-deforming subcomplex formed between SNX1 or SNX2 and SNX5 or SNX6 (also called SNX-BAR subcomplex); the respective CSC and SNX-BAR subcomplexes associate with low affinity. The CSC associates with SNX3 to form a SNX3-retromer complex. The CSC associates with SNX27, the WASH complex and the SNX-BAR subcomplex to form the SNX27-retromer complex. Interacts with VPS29, VPS35, TBC1D5, GOLPH3, SNX27. As to expression, ubiquitously expressed in developing embryo and adult. Highly expressed in brain.

It is found in the cytoplasm. The protein resides in the membrane. Its subcellular location is the early endosome. The protein localises to the late endosome. Functionally, acts as a component of the retromer cargo-selective complex (CSC). The CSC is believed to be the core functional component of retromer or respective retromer complex variants acting to prevent missorting of selected transmembrane cargo proteins into the lysosomal degradation pathway. The recruitment of the CSC to the endosomal membrane involves RAB7A and SNX3. The SNX-BAR retromer mediates retrograde transport of cargo proteins from endosomes to the trans-Golgi network (TGN) and is involved in endosome-to-plasma membrane transport for cargo protein recycling. The SNX3-retromer mediates the retrograde transport of WLS distinct from the SNX-BAR retromer pathway. The SNX27-retromer is believed to be involved in endosome-to-plasma membrane trafficking and recycling of a broad spectrum of cargo proteins. The CSC seems to act as recruitment hub for other proteins, such as the WASH complex and TBC1D5. May be involved in retrograde transport of SORT1 but not of IGF2R. Acts redundantly with VSP26A in SNX-27 mediated endocytic recycling of SLC2A1/GLUT1. The sequence is that of Vacuolar protein sorting-associated protein 26B (Vps26b) from Mus musculus (Mouse).